The following is a 156-amino-acid chain: Photosystem I reaction center subunit XI (156 aa).

A run of 2 helical transmembrane segments spans residues 75-95 (GGLL…SLYA) and 128-148 (FFIG…ALYF).

This sequence belongs to the PsaL family.

The protein localises to the cellular thylakoid membrane. This chain is Photosystem I reaction center subunit XI, found in Crocosphaera subtropica (strain ATCC 51142 / BH68) (Cyanothece sp. (strain ATCC 51142)).